The following is a 510-amino-acid chain: NAD(P)H-quinone oxidoreductase subunit 2 A, chloroplastic (510 aa).

13 consecutive transmembrane segments (helical) span residues 24–44, 57–77, 99–119, 124–144, 149–169, 183–203, 229–249, 295–315, 323–343, 354–374, 395–415, 418–438, and 484–504; these read LLLF…GLIL, IPWL…ALLF, IFQF…VEYI, MAIT…MFLC, LITI…LSGY, YLLM…WLYG, ISIA…PAPF, WHLL…LIAI, MLAY…IVGD, YMLF…LFGL, ALSS…AGFF, LYLF…IGLL, and MILC…IIAI.

Belongs to the complex I subunit 2 family. As to quaternary structure, NDH is composed of at least 16 different subunits, 5 of which are encoded in the nucleus.

The protein resides in the plastid. Its subcellular location is the chloroplast thylakoid membrane. It catalyses the reaction a plastoquinone + NADH + (n+1) H(+)(in) = a plastoquinol + NAD(+) + n H(+)(out). It carries out the reaction a plastoquinone + NADPH + (n+1) H(+)(in) = a plastoquinol + NADP(+) + n H(+)(out). In terms of biological role, NDH shuttles electrons from NAD(P)H:plastoquinone, via FMN and iron-sulfur (Fe-S) centers, to quinones in the photosynthetic chain and possibly in a chloroplast respiratory chain. The immediate electron acceptor for the enzyme in this species is believed to be plastoquinone. Couples the redox reaction to proton translocation, and thus conserves the redox energy in a proton gradient. The protein is NAD(P)H-quinone oxidoreductase subunit 2 A, chloroplastic of Piper cenocladum (Ant piper).